The primary structure comprises 306 residues: Beta-lactamase (306 aa).

A signal peptide spans 1–36; that stretch reads MKLKTKASIKFGICVGLLCLSITGFTPFFNSTHAEA. The active-site Acyl-ester intermediate is Ser89. 251 to 253 provides a ligand contact to substrate; sequence KSG.

It belongs to the class-A beta-lactamase family.

The protein resides in the secreted. It carries out the reaction a beta-lactam + H2O = a substituted beta-amino acid. Its function is as follows. This protein is a beta-lactamase with a substrate specificity for penicillins. The polypeptide is Beta-lactamase (penP) (Bacillus subtilis (strain 168)).